Here is a 393-residue protein sequence, read N- to C-terminus: tRNA (guanine-N(7)-)-methyltransferase (393 aa).

3 residues coordinate S-adenosyl-L-methionine: Glu124, Glu149, and Asp176. Residue Asp232 coordinates substrate.

Belongs to the class I-like SAM-binding methyltransferase superfamily. TrmB family.

It carries out the reaction guanosine(46) in tRNA + S-adenosyl-L-methionine = N(7)-methylguanosine(46) in tRNA + S-adenosyl-L-homocysteine. It participates in tRNA modification; N(7)-methylguanine-tRNA biosynthesis. Functionally, catalyzes the formation of N(7)-methylguanine at position 46 (m7G46) in tRNA. This chain is tRNA (guanine-N(7)-)-methyltransferase, found in Helicobacter pylori (strain HPAG1).